Consider the following 181-residue polypeptide: Oligoribonuclease (181 aa).

In terms of domain architecture, Exonuclease spans 8 to 171 (LIWIDLEMTG…DDIRESVAEL (164 aa)). Residue tyrosine 129 is part of the active site.

The protein belongs to the oligoribonuclease family. As to quaternary structure, homodimer.

It is found in the cytoplasm. In terms of biological role, 3'-to-5' exoribonuclease specific for small oligoribonucleotides. The protein is Oligoribonuclease of Escherichia coli O157:H7.